A 231-amino-acid polypeptide reads, in one-letter code: Response regulator MprA (231 aa).

The Response regulatory domain maps to 4-118 (RILVVDDDRA…ELLARMRALL (115 aa)). Asp48 carries the 4-aspartylphosphate modification. The ompR/PhoB-type DNA-binding region spans 130–228 (SAAMTFSDLS…VRGVGYVLRE (99 aa)).

In terms of processing, phosphorylated and dephosphorylated by MprB.

Its subcellular location is the cytoplasm. In terms of biological role, member of the two-component regulatory system MprB/MprA which contributes to maintaining a balance among several systems involved in stress resistance and is required for establishment and maintenance of persistent infection in the host. Functions as a transcriptional regulator that recognizes a 19-bp nucleotide motif comprizing two loosely conserved 8-bp direct DNA-binding motif repeats separated by a 3-bp spacer region. The protein is Response regulator MprA (mprA) of Mycolicibacterium vanbaalenii (strain DSM 7251 / JCM 13017 / BCRC 16820 / KCTC 9966 / NRRL B-24157 / PYR-1) (Mycobacterium vanbaalenii).